Consider the following 874-residue polypeptide: Alanine--tRNA ligase (874 aa).

Zn(2+)-binding residues include His-564, His-568, Cys-665, and His-669.

This sequence belongs to the class-II aminoacyl-tRNA synthetase family. Requires Zn(2+) as cofactor.

It localises to the cytoplasm. The catalysed reaction is tRNA(Ala) + L-alanine + ATP = L-alanyl-tRNA(Ala) + AMP + diphosphate. In terms of biological role, catalyzes the attachment of alanine to tRNA(Ala) in a two-step reaction: alanine is first activated by ATP to form Ala-AMP and then transferred to the acceptor end of tRNA(Ala). Also edits incorrectly charged Ser-tRNA(Ala) and Gly-tRNA(Ala) via its editing domain. The sequence is that of Alanine--tRNA ligase from Burkholderia cenocepacia (strain HI2424).